The primary structure comprises 171 residues: 3-hydroxydecanoyl-[acyl-carrier-protein] dehydratase (171 aa).

His-70 is a catalytic residue.

This sequence belongs to the thioester dehydratase family. FabA subfamily. In terms of assembly, homodimer.

It localises to the cytoplasm. The catalysed reaction is a (3R)-hydroxyacyl-[ACP] = a (2E)-enoyl-[ACP] + H2O. It catalyses the reaction (3R)-hydroxydecanoyl-[ACP] = (2E)-decenoyl-[ACP] + H2O. The enzyme catalyses (2E)-decenoyl-[ACP] = (3Z)-decenoyl-[ACP]. Its pathway is lipid metabolism; fatty acid biosynthesis. In terms of biological role, necessary for the introduction of cis unsaturation into fatty acids. Catalyzes the dehydration of (3R)-3-hydroxydecanoyl-ACP to E-(2)-decenoyl-ACP and then its isomerization to Z-(3)-decenoyl-ACP. Can catalyze the dehydratase reaction for beta-hydroxyacyl-ACPs with saturated chain lengths up to 16:0, being most active on intermediate chain length. The protein is 3-hydroxydecanoyl-[acyl-carrier-protein] dehydratase of Shewanella frigidimarina (strain NCIMB 400).